A 149-amino-acid chain; its full sequence is D-aminoacyl-tRNA deacylase (149 aa).

The Gly-cisPro motif, important for rejection of L-amino acids signature appears at 137-138 (GP).

The protein belongs to the DTD family. As to quaternary structure, homodimer.

It is found in the cytoplasm. It carries out the reaction glycyl-tRNA(Ala) + H2O = tRNA(Ala) + glycine + H(+). The enzyme catalyses a D-aminoacyl-tRNA + H2O = a tRNA + a D-alpha-amino acid + H(+). An aminoacyl-tRNA editing enzyme that deacylates mischarged D-aminoacyl-tRNAs. Also deacylates mischarged glycyl-tRNA(Ala), protecting cells against glycine mischarging by AlaRS. Acts via tRNA-based rather than protein-based catalysis; rejects L-amino acids rather than detecting D-amino acids in the active site. By recycling D-aminoacyl-tRNA to D-amino acids and free tRNA molecules, this enzyme counteracts the toxicity associated with the formation of D-aminoacyl-tRNA entities in vivo and helps enforce protein L-homochirality. This Clostridium perfringens (strain ATCC 13124 / DSM 756 / JCM 1290 / NCIMB 6125 / NCTC 8237 / Type A) protein is D-aminoacyl-tRNA deacylase.